The sequence spans 319 residues: uncharacterized protein (319 aa).

The disordered stretch occupies residues 281 to 319 (KVERKQRRRDDQNIMRSKLPQQRQNPFCSTERPKRARCD). Residues 299–308 (LPQQRQNPFC) are compositionally biased toward polar residues.

It localises to the cytoplasm. It is found in the nucleus. This is an uncharacterized protein from Saccharomyces cerevisiae (strain ATCC 204508 / S288c) (Baker's yeast).